A 1693-amino-acid chain; its full sequence is 1-phosphatidylinositol 4,5-bisphosphate phosphodiesterase eta-1 (1693 aa).

One can recognise a PH domain in the interval 20-128; the sequence is SVMQSGTQMI…WITGLKYLMA (109 aa). 3 EF-hand domains span residues 142–177, 178–214, and 226–246; these read THDQ…LNVN, LPRR…MSLR, and DKKD…EQKM. The Ca(2+) site is built by Asp155, Asn157, Asp159, and Glu166. A PI-PLC X-box domain is found at 299 to 444; sequence QDMDQPLCNY…LKGKILVKGK (146 aa). The active site involves His314. The Ca(2+) site is built by Asn315, Glu344, and Asp346. Residue His358 is part of the active site. Ca(2+) is bound at residue Glu393. Residues Lys442 and Lys444 each coordinate substrate. The interval 526 to 585 is disordered; the sequence is LNAHLKQSPDVKESGKKSHGRSLMTNFGKHKKTTKSRSKSYSTDDEEDTQQSTGKEGGQL. Over residues 532-541 the composition is skewed to basic and acidic residues; the sequence is QSPDVKESGK. Over residues 553 to 563 the composition is skewed to basic residues; the sequence is GKHKKTTKSRS. Residues 601 to 714 enclose the PI-PLC Y-box domain; that stretch reads LSDLVVYTNS…GYVLKPQQMC (114 aa). Substrate is bound by residues Ser627 and Arg654. Positions 715-843 constitute a C2 domain; that stretch reads KGTFNPFSGD…PGYRHVYLEG (129 aa). 6 residues coordinate Ca(2+): Ile758, Asp760, Asp784, Asp813, His814, and Asp815. Over residues 992-1005 the composition is skewed to basic and acidic residues; it reads IEGKENSLAEDKDG. Disordered stretches follow at residues 992–1014, 1052–1089, 1300–1329, and 1578–1613; these read IEGK…ASIK, TGEQ…PKQH, LESN…ETLK, and LSSR…GAGV. The segment covering 1065-1086 has biased composition (polar residues); sequence RTTSNATSNCQENPCPSKSLSP. A compositionally biased stretch (basic and acidic residues) spans 1592–1601; that stretch reads RAKEKQEANK.

It depends on Ca(2+) as a cofactor. In terms of tissue distribution, expressed in brain and to a lower extent in lung. In brain, it is found in cerebrum, cerebellum and spinal cord. In embryo expressed in the notochord, developing spinal cord (in a ventral to dorsal gradient), dorsal root ganglia, cerebellum and dermatomyosome.

The protein localises to the cytoplasm. The protein resides in the membrane. The catalysed reaction is a 1,2-diacyl-sn-glycero-3-phospho-(1D-myo-inositol-4,5-bisphosphate) + H2O = 1D-myo-inositol 1,4,5-trisphosphate + a 1,2-diacyl-sn-glycerol + H(+). Functionally, the production of the second messenger molecules diacylglycerol (DAG) and inositol 1,4,5-trisphosphate (IP3) is mediated by calcium-activated phosphatidylinositol-specific phospholipase C enzymes. This chain is 1-phosphatidylinositol 4,5-bisphosphate phosphodiesterase eta-1, found in Homo sapiens (Human).